The following is a 125-amino-acid chain: Large ribosomal subunit protein bL17 (125 aa).

The protein belongs to the bacterial ribosomal protein bL17 family. Part of the 50S ribosomal subunit. Contacts protein L32.

This is Large ribosomal subunit protein bL17 from Marinomonas sp. (strain MWYL1).